The primary structure comprises 501 residues: Capsid protein (501 aa).

A disordered region spans residues 78-98 (SEEGFPVEPKTEEKDIPSTSG). Residues 122–125 (KRGF) carry the Nuclear localization signal motif. Residues 431–448 (CKCWICHEEGHYANECPK) form a CCHC-type zinc finger.

The protein belongs to the caulimoviridae capsid protein family. In terms of assembly, interacts (via nuclear localization signal) with host importin alpha.

It localises to the virion. The protein resides in the host nucleus. Self assembles to form an icosahedral capsid, about 50 nm in diameter, nm, composed of 420 subunits of the viral capsid protein. The capsid encapsulates the genomic dsDNA. Following virus entry into host cell, provides nuclear import of the viral genome. Virus particles do not enter the nucleus, but dock at the nuclear membrane through the interaction with host importins. The chain is Capsid protein from Cestrum parqui (CmYLCV).